The chain runs to 38 residues: 4 kDa defensin (38 aa).

3 cysteine pairs are disulfide-bonded: Cys-4/Cys-25, Cys-11/Cys-33, and Cys-15/Cys-35.

The protein belongs to the invertebrate defensin family. Type 2 subfamily.

Its subcellular location is the secreted. Its function is as follows. Dual-function peptide with antimicrobial and potassium channel-blocking activities. Shows inhibitory activity against Gram-positive bacteria such as M.luteus, S.aureus, B.subtilis, and M.luteus as well as methicillin-resistant S.aureus (MIC=0.1-20 uM). Does not act on bacteria by disrupting membranes. Also moderately inhibits Kv1.1/KCNA1, Kv1.2/KCNA2, and Kv1.3/KCNA3 potassium channels. Inhibits potassium channels by interacting with the pore region. Does not show hemolytic activity. In Leiurus hebraeus (Hebrew deathstalker scorpion), this protein is 4 kDa defensin.